The following is a 140-amino-acid chain: Nucleoside diphosphate kinase (140 aa).

ATP-binding residues include Lys11, Phe59, Arg87, Thr93, Arg104, and Asn114. His117 serves as the catalytic Pros-phosphohistidine intermediate.

The protein belongs to the NDK family. As to quaternary structure, homotetramer. Requires Mg(2+) as cofactor.

It is found in the cytoplasm. The enzyme catalyses a 2'-deoxyribonucleoside 5'-diphosphate + ATP = a 2'-deoxyribonucleoside 5'-triphosphate + ADP. The catalysed reaction is a ribonucleoside 5'-diphosphate + ATP = a ribonucleoside 5'-triphosphate + ADP. In terms of biological role, major role in the synthesis of nucleoside triphosphates other than ATP. The ATP gamma phosphate is transferred to the NDP beta phosphate via a ping-pong mechanism, using a phosphorylated active-site intermediate. In Rhodovulum sulfidophilum (Rhodobacter sulfidophilus), this protein is Nucleoside diphosphate kinase.